Reading from the N-terminus, the 547-residue chain is Chaperonin GroEL (547 aa).

ATP contacts are provided by residues 30–33, K51, 87–91, G415, 479–481, and D495; these read TLGP, DGTTT, and NAA.

It belongs to the chaperonin (HSP60) family. Forms a cylinder of 14 subunits composed of two heptameric rings stacked back-to-back. Interacts with the co-chaperonin GroES.

The protein resides in the cytoplasm. It carries out the reaction ATP + H2O + a folded polypeptide = ADP + phosphate + an unfolded polypeptide.. Functionally, together with its co-chaperonin GroES, plays an essential role in assisting protein folding. The GroEL-GroES system forms a nano-cage that allows encapsulation of the non-native substrate proteins and provides a physical environment optimized to promote and accelerate protein folding. The chain is Chaperonin GroEL from Cupriavidus pinatubonensis (strain JMP 134 / LMG 1197) (Cupriavidus necator (strain JMP 134)).